The sequence spans 336 residues: Glycerol-3-phosphate dehydrogenase [NAD(P)+] (336 aa).

4 residues coordinate NADPH: Ser-16, Tyr-17, His-37, and Lys-111. Residues Lys-111, Gly-140, and Thr-142 each coordinate sn-glycerol 3-phosphate. Ala-144 provides a ligand contact to NADPH. The sn-glycerol 3-phosphate site is built by Lys-196, Asp-249, Ser-259, Arg-260, and Asn-261. The Proton acceptor role is filled by Lys-196. Arg-260 is a binding site for NADPH. Val-284 and Glu-286 together coordinate NADPH.

Belongs to the NAD-dependent glycerol-3-phosphate dehydrogenase family.

The protein localises to the cytoplasm. The enzyme catalyses sn-glycerol 3-phosphate + NAD(+) = dihydroxyacetone phosphate + NADH + H(+). It carries out the reaction sn-glycerol 3-phosphate + NADP(+) = dihydroxyacetone phosphate + NADPH + H(+). It participates in membrane lipid metabolism; glycerophospholipid metabolism. Its function is as follows. Catalyzes the reduction of the glycolytic intermediate dihydroxyacetone phosphate (DHAP) to sn-glycerol 3-phosphate (G3P), the key precursor for phospholipid synthesis. In Haemophilus ducreyi (strain 35000HP / ATCC 700724), this protein is Glycerol-3-phosphate dehydrogenase [NAD(P)+].